A 778-amino-acid chain; its full sequence is E3 UFM1-protein ligase 1 homolog (778 aa).

The segment at 404–477 is disordered; it reads NNLSTSHDAD…TVQQSAGNTR (74 aa). Over residues 445–457 the composition is skewed to basic residues; sequence KSTKKHQRGRAAA.

This sequence belongs to the UFL1 family.

In terms of biological role, E3 UFM1-protein ligase that mediates ufmylation of target proteins. This is E3 UFM1-protein ligase 1 homolog from Drosophila virilis (Fruit fly).